The primary structure comprises 191 residues: Holliday junction branch migration complex subunit RuvA (191 aa).

Residues 1-64 (MIGRLSGVLL…EDAHILFGFG (64 aa)) are domain I. The tract at residues 65 to 137 (TNEERNVFKQ…LKGKLGADLG (73 aa)) is domain II. The flexible linker stretch occupies residues 137 to 141 (GVAGA). The domain III stretch occupies residues 142 to 191 (VATDATSDILNALLALGYSDKEAMLALKQVPAGTGVSDGIKLALKSLSKA).

The protein belongs to the RuvA family. Homotetramer. Forms an RuvA(8)-RuvB(12)-Holliday junction (HJ) complex. HJ DNA is sandwiched between 2 RuvA tetramers; dsDNA enters through RuvA and exits via RuvB. An RuvB hexamer assembles on each DNA strand where it exits the tetramer. Each RuvB hexamer is contacted by two RuvA subunits (via domain III) on 2 adjacent RuvB subunits; this complex drives branch migration. In the full resolvosome a probable DNA-RuvA(4)-RuvB(12)-RuvC(2) complex forms which resolves the HJ.

It is found in the cytoplasm. The RuvA-RuvB-RuvC complex processes Holliday junction (HJ) DNA during genetic recombination and DNA repair, while the RuvA-RuvB complex plays an important role in the rescue of blocked DNA replication forks via replication fork reversal (RFR). RuvA specifically binds to HJ cruciform DNA, conferring on it an open structure. The RuvB hexamer acts as an ATP-dependent pump, pulling dsDNA into and through the RuvAB complex. HJ branch migration allows RuvC to scan DNA until it finds its consensus sequence, where it cleaves and resolves the cruciform DNA. The sequence is that of Holliday junction branch migration complex subunit RuvA from Janthinobacterium sp. (strain Marseille) (Minibacterium massiliensis).